The primary structure comprises 168 residues: Small ribosomal subunit protein uS5 (168 aa).

Residues 13–76 form the S5 DRBM domain; the sequence is LEENVVAINR…EDAKRKLITV (64 aa).

The protein belongs to the universal ribosomal protein uS5 family. In terms of assembly, part of the 30S ribosomal subunit. Contacts proteins S4 and S8.

Functionally, with S4 and S12 plays an important role in translational accuracy. Its function is as follows. Located at the back of the 30S subunit body where it stabilizes the conformation of the head with respect to the body. The polypeptide is Small ribosomal subunit protein uS5 (Leuconostoc mesenteroides subsp. mesenteroides (strain ATCC 8293 / DSM 20343 / BCRC 11652 / CCM 1803 / JCM 6124 / NCDO 523 / NBRC 100496 / NCIMB 8023 / NCTC 12954 / NRRL B-1118 / 37Y)).